Here is a 68-residue protein sequence, read N- to C-terminus: Large ribosomal subunit protein bL32 (68 aa).

A disordered region spans residues methionine 1–aspartate 20.

The protein belongs to the bacterial ribosomal protein bL32 family.

In Cereibacter sphaeroides (strain ATCC 17029 / ATH 2.4.9) (Rhodobacter sphaeroides), this protein is Large ribosomal subunit protein bL32.